A 94-amino-acid chain; its full sequence is Small ribosomal subunit protein uS19 (94 aa).

The protein belongs to the universal ribosomal protein uS19 family.

Protein S19 forms a complex with S13 that binds strongly to the 16S ribosomal RNA. The polypeptide is Small ribosomal subunit protein uS19 (Elusimicrobium minutum (strain Pei191)).